We begin with the raw amino-acid sequence, 514 residues long: RNA polymerase sigma factor SigA (514 aa).

Residues 135-159 (AAKKATAKKAAAKKTTAKKTAAKKS) show a composition bias toward basic residues. A disordered region spans residues 135-205 (AAKKATAKKA…SDDDEDDAPA (71 aa)). The interval 281–351 (LLEANLRLVV…TRAMADQART (71 aa)) is sigma-70 factor domain-2. Residues 305 to 308 (DLIQ) carry the Interaction with polymerase core subunit RpoC motif. A sigma-70 factor domain-3 region spans residues 360–436 (EVINKLARVQ…DSEAVVPADA (77 aa)). The interval 449–502 (VLDTLSEREAGVVSMRFGLTDGQPKTLDEIGKVYGVTRERIRQIESKTMSKLRH) is sigma-70 factor domain-4. The segment at residues 475-494 (LDEIGKVYGVTRERIRQIES) is a DNA-binding region (H-T-H motif).

The protein belongs to the sigma-70 factor family. RpoD/SigA subfamily. As to quaternary structure, interacts transiently with the RNA polymerase catalytic core.

It localises to the cytoplasm. Functionally, sigma factors are initiation factors that promote the attachment of RNA polymerase to specific initiation sites and are then released. This sigma factor is the primary sigma factor during exponential growth. This Streptomyces griseus protein is RNA polymerase sigma factor SigA.